The chain runs to 205 residues: Large ribosomal subunit protein uL3 (205 aa).

It belongs to the universal ribosomal protein uL3 family. In terms of assembly, part of the 50S ribosomal subunit. Forms a cluster with proteins L14 and L19.

Functionally, one of the primary rRNA binding proteins, it binds directly near the 3'-end of the 23S rRNA, where it nucleates assembly of the 50S subunit. In Thermosipho africanus (strain TCF52B), this protein is Large ribosomal subunit protein uL3.